The sequence spans 625 residues: Voltage-gated potassium channel KCNC4 (625 aa).

Disordered stretches follow at residues 1–24 (MISS…SKTC) and 65–86 (LADP…SSGS). Positions 1 to 28 (MISSVCVSSYRGRKSGNKPPSKTCLKEE) are inactivation gate. Topologically, residues 1-227 (MISSVCVSSY…EDPYSSRAAR (227 aa)) are cytoplasmic. Phosphoserine occurs at positions 8, 9, 15, and 21. The segment covering 77–86 (DGGGAGSSGS) has biased composition (gly residues). Zn(2+) is bound by residues His117, Cys123, Cys144, and Cys145. A helical transmembrane segment spans residues 228–248 (VVAFASLFFILVSITTFCLET). Asn257 and Asn266 each carry an N-linked (GlcNAc...) asparagine glycan. Residues 279-299 (EPILTYIEGVCVMWFTLEFLV) traverse the membrane as a helical segment. Residues 300-313 (RIVCCPDTLDFVKN) are Cytoplasmic-facing. The chain crosses the membrane as a helical span at residues 314–334 (LLNIIDFVAILPFYLEVGLSG). Residues 346–365 (FLRVVRFVRILRIFKLTRHF) form a helical; Voltage-sensor membrane-spanning segment. Topologically, residues 366–381 (VGLRVLGHTLRASTNE) are cytoplasmic. The helical transmembrane segment at 382–402 (FLLLIIFLALGVLIFATMIYY) threads the bilayer. Residues Thr437, Leu438, Gly439, and Tyr440 each contribute to the K(+) site. Positions 437 to 442 (TLGYGD) match the Selectivity filter motif. Residues 453 to 473 (VGALCALAGVLTIAMPVPVIV) form a helical membrane-spanning segment. Topologically, residues 474–625 (NNFGMYYSLA…CVPVSHTCAL (152 aa)) are cytoplasmic. The segment at 490-581 (PKKRKKHVPR…RRALRRSGTR (92 aa)) is disordered. A compositionally biased stretch (basic and acidic residues) spans 528–543 (AREEGMVERKRADSKQ).

The protein belongs to the potassium channel family. C (Shaw) (TC 1.A.1.2) subfamily. Kv3.4/KCNC4 sub-subfamily. In terms of assembly, homotetramer. Heterotetramer of potassium channel proteins. Post-translationally, phosphorylation of serine residues in the inactivation gate inhibits rapid channel closure.

It is found in the membrane. The enzyme catalyses K(+)(in) = K(+)(out). Its function is as follows. Voltage-gated potassium channel that opens in response to the voltage difference across the membrane, forming a potassium-selective channel through which potassium ions pass in accordance with their electrochemical gradient. The channel displays rapid activation and inactivation kinetics. This chain is Voltage-gated potassium channel KCNC4, found in Rattus norvegicus (Rat).